A 457-amino-acid chain; its full sequence is Autophagy-related protein 14 (457 aa).

A coiled-coil region spans residues 31–109 (RIENVMALIE…TRRAALSRRK (79 aa)). Disordered stretches follow at residues 54 to 73 (ETNA…QRTA), 252 to 274 (PSQA…VSRP), and 433 to 457 (NKNL…VKNR). The span at 253 to 266 (SQASVSSPSSTTDT) shows a compositional bias: low complexity.

The protein belongs to the ATG14 family. In terms of assembly, component of the autophagy-specific VPS34 PI3-kinase complex I.

It is found in the preautophagosomal structure membrane. Its subcellular location is the vacuole membrane. Required for cytoplasm to vacuole transport (Cvt) and autophagy as a part of the autophagy-specific VPS34 PI3-kinase complex I. This complex is essential to recruit the ATG8-phosphatidylinositol conjugate and the ATG12-ATG5 conjugate to the pre-autophagosomal structure. ATG14 mediates the specific binding of the VPS34 PI3-kinase complex I to the preautophagosomal structure (PAS). Autophagy is required for proper vegetative growth, asexual/sexual reproduction, and full virulence. Autophagy is particularly involved in the biosynthesis of deoxynivalenol (DON), an important virulence determinant. The protein is Autophagy-related protein 14 of Gibberella zeae (strain ATCC MYA-4620 / CBS 123657 / FGSC 9075 / NRRL 31084 / PH-1) (Wheat head blight fungus).